A 274-amino-acid polypeptide reads, in one-letter code: 23S rRNA (adenosine(1067)-2'-O)-methyltransferase (274 aa).

Residues Arg-165, Leu-195, 218 to 220 (GSE), 238 to 240 (IPM), and 247 to 252 (LNVSVS) contribute to the S-adenosyl-L-methionine site.

Belongs to the class IV-like SAM-binding methyltransferase superfamily. RNA methyltransferase TsnR/AvirB family. In terms of assembly, homodimer.

The enzyme catalyses adenosine(1067) in 23S rRNA + S-adenosyl-L-methionine = 2'-O-methyladenosine(1067) in 23S rRNA + S-adenosyl-L-homocysteine + H(+). In terms of biological role, specifically methylates the adenosine-1067 in 23S ribosomal RNA. Confers resistance to antibiotic nosiheptide. The sequence is that of 23S rRNA (adenosine(1067)-2'-O)-methyltransferase from Streptomyces actuosus.